The following is a 362-amino-acid chain: MSENGSFANCCEAGGWAVRPGWSGAGSARPSRTPRPPWVAPALSAVLIVTTAVDVVGNLLVILSVLRNRKLRNAGNLFLVSLALADLVVAFYPYPLILVAIFYDGWALGEEHCKASAFVMGLSVIGSVFNITAIAINRYCYICHSMAYHRIYRRWHTPLHICLIWLLTVVALLPNFFVGSLEYDPRIYSCTFIQTASTQYTAAVVVIHFLLPIAVVSFCYLRIWVLVLQARRKAKPESRLCLKPSDLRSFLTMFVVFVIFAICWAPLNCIGLAVAINPQEMAPQIPEGLFVTSYLLAYFNSCLNAIVYGLLNQNFRREYKRILLALWNPRHCIQDASKGSHAEGLQSPAPPIIGVQHQADAL.

At 1–42 (MSENGSFANCCEAGGWAVRPGWSGAGSARPSRTPRPPWVAPA) the chain is on the extracellular side. N4 carries N-linked (GlcNAc...) asparagine glycosylation. The helical transmembrane segment at 43 to 63 (LSAVLIVTTAVDVVGNLLVIL) threads the bilayer. Residues 64–76 (SVLRNRKLRNAGN) lie on the Cytoplasmic side of the membrane. A helical membrane pass occupies residues 77–97 (LFLVSLALADLVVAFYPYPLI). The Extracellular segment spans residues 98 to 115 (LVAIFYDGWALGEEHCKA). An intrachain disulfide couples C113 to C190. Residues 116 to 136 (SAFVMGLSVIGSVFNITAIAI) form a helical membrane-spanning segment. Topologically, residues 137–155 (NRYCYICHSMAYHRIYRRW) are cytoplasmic. A helical transmembrane segment spans residues 156 to 176 (HTPLHICLIWLLTVVALLPNF). 2 residues coordinate melatonin: N175 and Q194. Over 177–200 (FVGSLEYDPRIYSCTFIQTASTQY) the chain is Extracellular. A helical transmembrane segment spans residues 201-221 (TAAVVVIHFLLPIAVVSFCYL). Residues 222–253 (RIWVLVLQARRKAKPESRLCLKPSDLRSFLTM) are Cytoplasmic-facing. Residues 254-274 (FVVFVIFAICWAPLNCIGLAV) traverse the membrane as a helical segment. Topologically, residues 275 to 287 (AINPQEMAPQIPE) are extracellular. A helical membrane pass occupies residues 288 to 308 (GLFVTSYLLAYFNSCLNAIVY). Over 309-362 (GLLNQNFRREYKRILLALWNPRHCIQDASKGSHAEGLQSPAPPIIGVQHQADAL) the chain is Cytoplasmic.

It belongs to the G-protein coupled receptor 1 family. As to quaternary structure, interacts with GPR61, GPR62 and GPR135. As to expression, expressed in retina and less in brain and hippocampus.

Its subcellular location is the cell membrane. In terms of biological role, high affinity receptor for melatonin. Likely to mediate the reproductive and circadian actions of melatonin. The activity of this receptor is mediated by pertussis toxin sensitive G proteins that inhibit adenylate cyclase activity. The polypeptide is Melatonin receptor type 1B (MTNR1B) (Homo sapiens (Human)).